Consider the following 881-residue polypeptide: Alanine--tRNA ligase (881 aa).

Zn(2+)-binding residues include H565, H569, C672, and H676.

Belongs to the class-II aminoacyl-tRNA synthetase family. Zn(2+) serves as cofactor.

It localises to the cytoplasm. The enzyme catalyses tRNA(Ala) + L-alanine + ATP = L-alanyl-tRNA(Ala) + AMP + diphosphate. Catalyzes the attachment of alanine to tRNA(Ala) in a two-step reaction: alanine is first activated by ATP to form Ala-AMP and then transferred to the acceptor end of tRNA(Ala). Also edits incorrectly charged Ser-tRNA(Ala) and Gly-tRNA(Ala) via its editing domain. The sequence is that of Alanine--tRNA ligase from Novosphingobium aromaticivorans (strain ATCC 700278 / DSM 12444 / CCUG 56034 / CIP 105152 / NBRC 16084 / F199).